A 164-amino-acid polypeptide reads, in one-letter code: CB1 cannabinoid receptor-interacting protein 1 (164 aa).

Belongs to the CNRIP family. In terms of assembly, interacts with the cannabinoid receptor CNR1 (via C-terminus). Does not interact with cannabinoid receptor CNR2.

Its function is as follows. Suppresses cannabinoid receptor CNR1-mediated tonic inhibition of voltage-gated calcium channels. In Rattus norvegicus (Rat), this protein is CB1 cannabinoid receptor-interacting protein 1 (Cnrip1).